A 313-amino-acid chain; its full sequence is MPIKIDKKLPAVEILSSENIFVMDDDRADHQDIRPLNILVLNLMPQKMVTETQILRHLANTPLQLTIDFLYMSSHQSKTTRAEHMETFYKTFDEVKNRYFDGLIITGAPVEHLPFEAVDYWEEFQQVIEWSKTHVFSTLHICWGAQAGLYARYGVDKHQMTRKLSGVYSQSADSNNLLFRGFDDEFYAPHSRHTEVLKEDIVNLTNLEILSYGEDTGLSVLASRDLREVYSFGHMEYDRDTLSKEYFRDLKAGKNPHIPENYFKNDDVHETPALCWSSAAALFFNNWINYAVYQETPFDWENPENDASYFAYL.

C142 acts as the Acyl-thioester intermediate in catalysis. Residues K163 and S191 each coordinate substrate. H234 acts as the Proton acceptor in catalysis. The active site involves E236. R248 contributes to the substrate binding site.

The protein belongs to the MetA family.

The protein localises to the cytoplasm. The catalysed reaction is L-homoserine + acetyl-CoA = O-acetyl-L-homoserine + CoA. Its pathway is amino-acid biosynthesis; L-methionine biosynthesis via de novo pathway; O-acetyl-L-homoserine from L-homoserine: step 1/1. Functionally, transfers an acetyl group from acetyl-CoA to L-homoserine, forming acetyl-L-homoserine. The chain is Homoserine O-acetyltransferase from Streptococcus gordonii (strain Challis / ATCC 35105 / BCRC 15272 / CH1 / DL1 / V288).